The sequence spans 495 residues: Germacrene A acid 8-beta-hydroxylase (495 aa).

Residues 3–23 (PFTTFSLVASSLILLICWALV) traverse the membrane as a helical; Signal-anchor for type II membrane protein segment. Residue Asn-103 is glycosylated (N-linked (GlcNAc...) asparagine). Residue Cys-433 coordinates heme.

The protein belongs to the cytochrome P450 family. It depends on heme as a cofactor. In terms of tissue distribution, mostly expressed in leaves and flowers, and, to a lower extent, in roots and stems.

It is found in the membrane. It catalyses the reaction germacra-1(10),4,11(13)-trien-12-oate + reduced [NADPH--hemoprotein reductase] + O2 = 8beta-hydroxygermacra-1(10),4,11(13)-trien-12-oate + oxidized [NADPH--hemoprotein reductase] + H2O + H(+). The enzyme catalyses germacra-1(10),4,11(13)-trien-12-oate + reduced [NADPH--hemoprotein reductase] + O2 = 8-epi-inunolide + oxidized [NADPH--hemoprotein reductase] + 2 H2O. The catalysed reaction is germacra-1(10),4,11(13)-trien-12-oate + reduced [NADPH--hemoprotein reductase] + O2 = 8alpha-hydroxygermacra-1(10),4,11(13)-trien-12-oate + oxidized [NADPH--hemoprotein reductase] + H2O + H(+). It participates in secondary metabolite biosynthesis; terpenoid biosynthesis. Its function is as follows. Involved in the biosynthesis of germacrene-derived sesquiterpene lactones. Hydroxylates germacrene A acid to 8-beta-hydroxy-germacrene A and 8-alpha-hydroxy-germacrene A acids. Unlike 8-alpha-hydroxy-germacrene A acid with is spontaneously converted into inunolide (12, 8-alpha), 8-beta-hydroxy-germacrene A cannot undergo spontaneous lactonization. This chain is Germacrene A acid 8-beta-hydroxylase, found in Inula hupehensis (Inula helianthus-aquatilis subsp. hupehensis).